The chain runs to 404 residues: Argininosuccinate synthase (404 aa).

9–17 (AYSGGLDTS) serves as a coordination point for ATP. L-citrulline is bound at residue tyrosine 86. ATP is bound at residue glycine 116. L-aspartate contacts are provided by threonine 118, asparagine 122, and aspartate 123. Asparagine 122 serves as a coordination point for L-citrulline. L-citrulline-binding residues include arginine 126, serine 174, serine 183, glutamate 259, and tyrosine 271.

It belongs to the argininosuccinate synthase family. Type 1 subfamily. As to quaternary structure, homotetramer.

The protein localises to the cytoplasm. It carries out the reaction L-citrulline + L-aspartate + ATP = 2-(N(omega)-L-arginino)succinate + AMP + diphosphate + H(+). Its pathway is amino-acid biosynthesis; L-arginine biosynthesis; L-arginine from L-ornithine and carbamoyl phosphate: step 2/3. This is Argininosuccinate synthase from Listeria monocytogenes serotype 4b (strain CLIP80459).